We begin with the raw amino-acid sequence, 329 residues long: Acetyl-coenzyme A carboxylase carboxyl transferase subunit alpha (329 aa).

Residues 40 to 294 (QLETLAARRR…KTSILRHLTE (255 aa)) enclose the CoA carboxyltransferase C-terminal domain.

Belongs to the AccA family. Acetyl-CoA carboxylase is a heterohexamer composed of biotin carboxyl carrier protein (AccB), biotin carboxylase (AccC) and two subunits each of ACCase subunit alpha (AccA) and ACCase subunit beta (AccD).

It localises to the cytoplasm. The enzyme catalyses N(6)-carboxybiotinyl-L-lysyl-[protein] + acetyl-CoA = N(6)-biotinyl-L-lysyl-[protein] + malonyl-CoA. It functions in the pathway lipid metabolism; malonyl-CoA biosynthesis; malonyl-CoA from acetyl-CoA: step 1/1. Functionally, component of the acetyl coenzyme A carboxylase (ACC) complex. First, biotin carboxylase catalyzes the carboxylation of biotin on its carrier protein (BCCP) and then the CO(2) group is transferred by the carboxyltransferase to acetyl-CoA to form malonyl-CoA. In Prochlorococcus marinus (strain SARG / CCMP1375 / SS120), this protein is Acetyl-coenzyme A carboxylase carboxyl transferase subunit alpha.